An 812-amino-acid polypeptide reads, in one-letter code: Lon protease (812 aa).

Positions Tyr-22–Ile-215 constitute a Lon N-terminal domain. Gly-367–Thr-374 is an ATP binding site. The Lon proteolytic domain maps to Glu-602 to Arg-783. Active-site residues include Ser-689 and Lys-732. Residues Pro-787–His-812 form a disordered region.

The protein belongs to the peptidase S16 family. Homohexamer. Organized in a ring with a central cavity.

The protein resides in the cytoplasm. The catalysed reaction is Hydrolysis of proteins in presence of ATP.. ATP-dependent serine protease that mediates the selective degradation of mutant and abnormal proteins as well as certain short-lived regulatory proteins. Required for cellular homeostasis and for survival from DNA damage and developmental changes induced by stress. Degrades polypeptides processively to yield small peptide fragments that are 5 to 10 amino acids long. Binds to DNA in a double-stranded, site-specific manner. Required for wild-type virulence during the initial stages of infection in the mouse model, but not essential for the establishment and maintenance of chronic infection in this host. This chain is Lon protease, found in Brucella abortus (strain 2308).